Here is a 285-residue protein sequence, read N- to C-terminus: Putative cuticle collagen 75 (285 aa).

Triple-helical region stretches follow at residues 87 to 116 and 133 to 261; these read GRIG…PGEL and GPKG…PGLD. Positions 207-231 are enriched in low complexity; sequence PGAPGIPGEEGLSGPTGQPGSPGSI. The interval 207–257 is disordered; the sequence is PGAPGIPGEEGLSGPTGQPGSPGSIGAMGYEGAYGDRGEPGPPGPIGRRGG.

It belongs to the cuticular collagen family. As to quaternary structure, collagen polypeptide chains are complexed within the cuticle by disulfide bonds and other types of covalent cross-links.

Its function is as follows. Nematode cuticles are composed largely of collagen-like proteins. The cuticle functions both as an exoskeleton and as a barrier to protect the worm from its environment. This Caenorhabditis elegans protein is Putative cuticle collagen 75 (col-75).